The chain runs to 390 residues: Peroxisomal sarcosine oxidase (390 aa).

Residue 9–39 participates in FAD binding; it reads DAIVIGAGIQGCFTAYHLAKHSKSVLLLEQF. K126 and K287 each carry N6-acetyllysine. The residue at position 319 (C319) is an S-8alpha-FAD cysteine. The short motif at 388-390 is the Microbody targeting signal element; sequence AHL.

This sequence belongs to the MSOX/MTOX family. The cofactor is FAD. Kidney and liver.

The protein resides in the peroxisome. It catalyses the reaction sarcosine + O2 + H2O = formaldehyde + glycine + H2O2. It carries out the reaction L-pipecolate + O2 = L-1-piperideine-6-carboxylate + H2O2 + H(+). Functionally, metabolizes sarcosine, L-pipecolic acid and L-proline. The sequence is that of Peroxisomal sarcosine oxidase (Pipox) from Mus musculus (Mouse).